A 270-amino-acid chain; its full sequence is Formamidopyrimidine-DNA glycosylase (270 aa).

Pro-2 functions as the Schiff-base intermediate with DNA in the catalytic mechanism. The active-site Proton donor is the Glu-3. Lys-58 functions as the Proton donor; for beta-elimination activity in the catalytic mechanism. DNA contacts are provided by His-91, Arg-110, and Arg-151. The segment at 236–270 adopts an FPG-type zinc-finger fold; the sequence is FVYGRGGEFCKVCGSTLREIRLGQRASVYCPRCQR. Arg-260 (proton donor; for delta-elimination activity) is an active-site residue.

Belongs to the FPG family. As to quaternary structure, monomer. It depends on Zn(2+) as a cofactor.

It catalyses the reaction Hydrolysis of DNA containing ring-opened 7-methylguanine residues, releasing 2,6-diamino-4-hydroxy-5-(N-methyl)formamidopyrimidine.. It carries out the reaction 2'-deoxyribonucleotide-(2'-deoxyribose 5'-phosphate)-2'-deoxyribonucleotide-DNA = a 3'-end 2'-deoxyribonucleotide-(2,3-dehydro-2,3-deoxyribose 5'-phosphate)-DNA + a 5'-end 5'-phospho-2'-deoxyribonucleoside-DNA + H(+). Functionally, involved in base excision repair of DNA damaged by oxidation or by mutagenic agents. Acts as a DNA glycosylase that recognizes and removes damaged bases. Has a preference for oxidized purines, such as 7,8-dihydro-8-oxoguanine (8-oxoG). Has AP (apurinic/apyrimidinic) lyase activity and introduces nicks in the DNA strand. Cleaves the DNA backbone by beta-delta elimination to generate a single-strand break at the site of the removed base with both 3'- and 5'-phosphates. This Pseudomonas paraeruginosa (strain DSM 24068 / PA7) (Pseudomonas aeruginosa (strain PA7)) protein is Formamidopyrimidine-DNA glycosylase.